A 506-amino-acid chain; its full sequence is Maturase K (506 aa).

This sequence belongs to the intron maturase 2 family. MatK subfamily.

Its subcellular location is the plastid. The protein localises to the chloroplast. Functionally, usually encoded in the trnK tRNA gene intron. Probably assists in splicing its own and other chloroplast group II introns. This is Maturase K from Arabis alpina (Alpine rock-cress).